The chain runs to 579 residues: Zinc metalloproteinase nas-11 (579 aa).

The first 17 residues, 1–17 (MTPSLVFLIVVIVVVEG), serve as a signal peptide directing secretion. Residues 18–328 (QGWRPWDRFN…AAPGSSRLKK (311 aa)) constitute a propeptide that is removed on maturation. The disordered stretch occupies residues 35 to 58 (WGGNNWGTRQRNQEPHDIPPPVPP). N-linked (GlcNAc...) asparagine glycosylation is present at Asn-256. The segment covering 293–312 (GDDEIPLPDADTDDEDDDDS) has biased composition (acidic residues). The disordered stretch occupies residues 293–323 (GDDEIPLPDADTDDEDDDDSTNSASGAAPGS). The Peptidase M12A domain occupies 329-536 (SALYFEGNLI…IELLKKMYCQ (208 aa)). 5 disulfides stabilise this stretch: Cys-375/Cys-535, Cys-401/Cys-421, Cys-539/Cys-575, Cys-546/Cys-568, and Cys-555/Cys-572. His-430 lines the Zn(2+) pocket. Glu-431 is a catalytic residue. Zn(2+) contacts are provided by His-434 and His-440. An N-linked (GlcNAc...) asparagine glycan is attached at Asn-454. Residues 539-575 (CDDKNVYCGAWALKDLCKNPGHDQYMAANCKKSCGLC) form the ShKT domain.

The cofactor is Zn(2+). Expressed in the anterior part of the intestine, CEP neurons and to a lesser extent in hypodermis.

The protein localises to the secreted. Functionally, metalloprotease. This chain is Zinc metalloproteinase nas-11 (nas-11), found in Caenorhabditis elegans.